Reading from the N-terminus, the 621-residue chain is tRNA uridine 5-carboxymethylaminomethyl modification enzyme MnmG (621 aa).

8-13 is an FAD binding site; it reads GAGHAG. Position 269-283 (269-283) interacts with NAD(+); sequence GPRYCPSIEDKIHRF.

It belongs to the MnmG family. As to quaternary structure, homodimer. Heterotetramer of two MnmE and two MnmG subunits. FAD is required as a cofactor.

It localises to the cytoplasm. NAD-binding protein involved in the addition of a carboxymethylaminomethyl (cmnm) group at the wobble position (U34) of certain tRNAs, forming tRNA-cmnm(5)s(2)U34. This is tRNA uridine 5-carboxymethylaminomethyl modification enzyme MnmG from Chlorobium phaeovibrioides (strain DSM 265 / 1930) (Prosthecochloris vibrioformis (strain DSM 265)).